A 239-amino-acid chain; its full sequence is MNCLRDSGRGLIPAWETLLLTGALLSSCTCSATSKLPQMKGANTQLPVPGALEKDLSTSWFPELEAQPPTSSSPKGLPGRPRTSQEVPNAEDNPSLIPLVTFPESSKGIIYSDLNYSVILQWMVTMNPEPVLSWTFDGKPCGTGEKLFIRRLSPDQLGTYLCIARNTDKELVSEPVTVSLSPATGAPTVPAPTVAYPMKPNDYMSVSGGSAIALIVAATIGGLVLIGSVCFYILLALKK.

A disordered region spans residues 63-93 (ELEAQPPTSSSPKGLPGRPRTSQEVPNAEDN). Residues 94–179 (PSLIPLVTFP…ELVSEPVTVS (86 aa)) enclose the Ig-like domain. Residues 214–234 (LIVAATIGGLVLIGSVCFYIL) traverse the membrane as a helical segment.

Its subcellular location is the cell membrane. In terms of biological role, may be involved in osteoclast differentiation. The protein is Immunoglobulin superfamily member 23 of Mus musculus (Mouse).